We begin with the raw amino-acid sequence, 273 residues long: Large ribosomal subunit protein uL2 (273 aa).

Disordered stretches follow at residues 34 to 54 (LEKKSKSGGRNNNGRITTRHI) and 223 to 273 (VAMN…RRRK).

Belongs to the universal ribosomal protein uL2 family. Part of the 50S ribosomal subunit. Forms a bridge to the 30S subunit in the 70S ribosome.

Functionally, one of the primary rRNA binding proteins. Required for association of the 30S and 50S subunits to form the 70S ribosome, for tRNA binding and peptide bond formation. It has been suggested to have peptidyltransferase activity; this is somewhat controversial. Makes several contacts with the 16S rRNA in the 70S ribosome. The protein is Large ribosomal subunit protein uL2 of Azotobacter vinelandii (strain DJ / ATCC BAA-1303).